The following is a 137-amino-acid chain: Basic phospholipase A2 beta-bungarotoxin A5 chain (137 aa).

The signal sequence occupies residues 1–9 (AVCVSLLGA). Residues 10–17 (ANIPPQHL) constitute a propeptide that is removed on maturation. Cystine bridges form between cysteine 44–cysteine 136, cysteine 46–cysteine 62, cysteine 61–cysteine 117, cysteine 68–cysteine 110, cysteine 78–cysteine 103, and cysteine 96–cysteine 108. Tyrosine 45, glycine 47, and glycine 49 together coordinate Ca(2+). Histidine 65 is an active-site residue. Aspartate 66 contacts Ca(2+). Aspartate 111 is a catalytic residue.

It belongs to the phospholipase A2 family. Group I subfamily. D49 sub-subfamily. As to quaternary structure, heterodimer; disulfide-linked. The A chains have phospholipase A2 activity and the B chains show homology with the basic protease inhibitors. The cofactor is Ca(2+). In terms of tissue distribution, expressed by the venom gland.

The protein resides in the secreted. It catalyses the reaction a 1,2-diacyl-sn-glycero-3-phosphocholine + H2O = a 1-acyl-sn-glycero-3-phosphocholine + a fatty acid + H(+). In terms of biological role, snake venom phospholipase A2 (PLA2) that inhibits neuromuscular transmission by blocking acetylcholine release from the nerve termini. PLA2 catalyzes the calcium-dependent hydrolysis of the 2-acyl groups in 3-sn-phosphoglycerides. This Bungarus multicinctus (Many-banded krait) protein is Basic phospholipase A2 beta-bungarotoxin A5 chain.